The following is a 100-amino-acid chain: MLRYNFRYLHNVLSHTVVFCFTEVSLHIVKQLGVESYACTVHASRFQKSYSASIDYCQRFLFSSNLKHNYVNLNIIFTSCIFRSLREFLRFYIAAIMCFL.

The protein resides in the cytoplasm. It is found in the endoplasmic reticulum. This is an uncharacterized protein from Schizosaccharomyces pombe (strain 972 / ATCC 24843) (Fission yeast).